The chain runs to 131 residues: Ribonuclease VapC42 (131 aa).

The 125-residue stretch at 1 to 125 (MIVDTSAIVA…FRGDDFTHTD (125 aa)) folds into the PINc domain. Positions 4 and 100 each coordinate Mg(2+).

The protein belongs to the PINc/VapC protein family. Requires Mg(2+) as cofactor.

Its function is as follows. Toxic component of a type II toxin-antitoxin (TA) system. An RNase. Its cognate antitoxin is VapB42. The sequence is that of Ribonuclease VapC42 from Mycobacterium tuberculosis (strain CDC 1551 / Oshkosh).